The primary structure comprises 508 residues: Methionine--tRNA ligase (508 aa).

A 'HIGH' region motif is present at residues 12–22 (YYVNDVAHIGH). Positions 295-299 (KISKS) match the 'KMSKS' region motif. Lysine 298 contributes to the ATP binding site.

The protein belongs to the class-I aminoacyl-tRNA synthetase family. MetG type 2B subfamily. Monomer.

Its subcellular location is the cytoplasm. The catalysed reaction is tRNA(Met) + L-methionine + ATP = L-methionyl-tRNA(Met) + AMP + diphosphate. Its function is as follows. Is required not only for elongation of protein synthesis but also for the initiation of all mRNA translation through initiator tRNA(fMet) aminoacylation. The sequence is that of Methionine--tRNA ligase (metG) from Rickettsia prowazekii (strain Madrid E).